The following is a 205-amino-acid chain: Urease accessory protein UreG (205 aa).

11–18 is a binding site for GTP; sequence GPVGSGKT.

The protein belongs to the SIMIBI class G3E GTPase family. UreG subfamily. As to quaternary structure, homodimer. UreD, UreF and UreG form a complex that acts as a GTP-hydrolysis-dependent molecular chaperone, activating the urease apoprotein by helping to assemble the nickel containing metallocenter of UreC. The UreE protein probably delivers the nickel.

It is found in the cytoplasm. In terms of biological role, facilitates the functional incorporation of the urease nickel metallocenter. This process requires GTP hydrolysis, probably effectuated by UreG. This is Urease accessory protein UreG from Prochlorococcus marinus (strain NATL2A).